A 337-amino-acid polypeptide reads, in one-letter code: Bifunctional methylenetetrahydrofolate dehydrogenase/cyclohydrolase, mitochondrial (337 aa).

The transit peptide at 1-30 directs the protein to the mitochondrion; it reads MATALCPLRALGQTAFRPRTRRLHLSAPRA. Substrate is bound by residues 79-83 and 126-128; these read YVLNK and VQL. Residues 195–197 and Arg228 each bind NAD(+); that span reads GRS. 304–308 lines the substrate pocket; it reads PGGVG.

This sequence belongs to the tetrahydrofolate dehydrogenase/cyclohydrolase family. Mg(2+) is required as a cofactor.

The protein localises to the mitochondrion. The enzyme catalyses (6R)-5,10-methylene-5,6,7,8-tetrahydrofolate + NAD(+) = (6R)-5,10-methenyltetrahydrofolate + NADH. The catalysed reaction is (6R)-5,10-methenyltetrahydrofolate + H2O = (6R)-10-formyltetrahydrofolate + H(+). Its function is as follows. Although its dehydrogenase activity is NAD-specific, it can also utilize NADP at a reduced efficiency. In Gallus gallus (Chicken), this protein is Bifunctional methylenetetrahydrofolate dehydrogenase/cyclohydrolase, mitochondrial (MTHFD2).